We begin with the raw amino-acid sequence, 568 residues long: 2-succinyl-5-enolpyruvyl-6-hydroxy-3-cyclohexene-1-carboxylate synthase (568 aa).

The protein belongs to the TPP enzyme family. MenD subfamily. Homodimer. Mg(2+) is required as a cofactor. Requires Mn(2+) as cofactor. The cofactor is thiamine diphosphate.

The enzyme catalyses isochorismate + 2-oxoglutarate + H(+) = 5-enolpyruvoyl-6-hydroxy-2-succinyl-cyclohex-3-ene-1-carboxylate + CO2. The protein operates within quinol/quinone metabolism; 1,4-dihydroxy-2-naphthoate biosynthesis; 1,4-dihydroxy-2-naphthoate from chorismate: step 2/7. It functions in the pathway quinol/quinone metabolism; menaquinone biosynthesis. In terms of biological role, catalyzes the thiamine diphosphate-dependent decarboxylation of 2-oxoglutarate and the subsequent addition of the resulting succinic semialdehyde-thiamine pyrophosphate anion to isochorismate to yield 2-succinyl-5-enolpyruvyl-6-hydroxy-3-cyclohexene-1-carboxylate (SEPHCHC). The chain is 2-succinyl-5-enolpyruvyl-6-hydroxy-3-cyclohexene-1-carboxylate synthase from Haemophilus influenzae (strain ATCC 51907 / DSM 11121 / KW20 / Rd).